The following is a 417-amino-acid chain: Phosphoglycerate kinase 2 (417 aa).

At Ser-2 the chain carries N-acetylserine. Phosphoserine occurs at positions 2 and 4. Lys-11 is subject to N6-acetyllysine. Residues Val-23, Asp-24, Phe-25, Asn-26, Gln-38, and Arg-39 each contribute to the (2R)-3-phosphoglycerate site. Lys-48 is subject to N6-acetyllysine. Residues Ser-62, His-63, Gly-65, and Arg-66 each coordinate (2R)-3-phosphoglycerate. N6-acetyllysine is present on residues Lys-75, Lys-86, and Lys-97. Positions 122 and 123 each coordinate (2R)-3-phosphoglycerate. N6-acetyllysine occurs at positions 131 and 146. 2 residues coordinate (2R)-3-phosphoglycerate: His-170 and Arg-171. Tyr-196 is modified (phosphotyrosine). Lys-199 is modified (N6-acetyllysine). Residue Gly-214 participates in ADP binding. Gly-214 contributes to the CDP binding site. AMP contacts are provided by Ala-215 and Lys-216. Position 215 (Ala-215) interacts with ATP. Ala-215 is a binding site for Mg(2+). Residues Ala-218 and Asp-219 each coordinate Mg(2+). Asp-219 provides a ligand contact to CDP. Residue Lys-220 coordinates AMP. Lys-220 contacts ATP. Position 238 (Gly-238) interacts with ADP. Gly-238 is a CDP binding site. Residue Gly-239 coordinates AMP. ATP is bound at residue Gly-239. An N6-acetyllysine mark is found at Lys-267 and Lys-291. Gly-313 provides a ligand contact to AMP. Gly-313 lines the ATP pocket. CDP contacts are provided by Gly-338 and Phe-343. Position 343 (Phe-343) interacts with ADP. Glu-344 contributes to the AMP binding site. The ATP site is built by Glu-344, Asp-375, and Thr-376. Residue Asp-375 participates in Mg(2+) binding.

The protein belongs to the phosphoglycerate kinase family. Monomer. It depends on Mg(2+) as a cofactor.

The protein localises to the cytoplasm. It carries out the reaction (2R)-3-phosphoglycerate + ATP = (2R)-3-phospho-glyceroyl phosphate + ADP. It functions in the pathway carbohydrate degradation; glycolysis; pyruvate from D-glyceraldehyde 3-phosphate: step 2/5. In terms of biological role, essential for sperm motility and male fertility but is not required for the completion of spermatogenesis. The protein is Phosphoglycerate kinase 2 (PGK2) of Macaca fascicularis (Crab-eating macaque).